Here is a 507-residue protein sequence, read N- to C-terminus: Ribosomal protein uS12 methylthiotransferase RimO (507 aa).

An MTTase N-terminal domain is found at 13–124; that stretch reads RRVALLTLGC…ISDRLGAVLA (112 aa). Residues C22, C58, C87, C205, C209, and C212 each contribute to the [4Fe-4S] cluster site. Residues 191–422 enclose the Radical SAM core domain; that stretch reads LDTGPVASLK…ALADELCAQR (232 aa). One can recognise a TRAM domain in the interval 424–497; the sequence is EQRLGSTVQV…GVDLVAVPDA (74 aa).

It belongs to the methylthiotransferase family. RimO subfamily. [4Fe-4S] cluster is required as a cofactor.

The protein resides in the cytoplasm. It catalyses the reaction L-aspartate(89)-[ribosomal protein uS12]-hydrogen + (sulfur carrier)-SH + AH2 + 2 S-adenosyl-L-methionine = 3-methylsulfanyl-L-aspartate(89)-[ribosomal protein uS12]-hydrogen + (sulfur carrier)-H + 5'-deoxyadenosine + L-methionine + A + S-adenosyl-L-homocysteine + 2 H(+). Functionally, catalyzes the methylthiolation of an aspartic acid residue of ribosomal protein uS12. In Salinispora tropica (strain ATCC BAA-916 / DSM 44818 / JCM 13857 / NBRC 105044 / CNB-440), this protein is Ribosomal protein uS12 methylthiotransferase RimO.